We begin with the raw amino-acid sequence, 572 residues long: Proline--tRNA ligase (572 aa).

This sequence belongs to the class-II aminoacyl-tRNA synthetase family. ProS type 1 subfamily. Homodimer.

The protein resides in the cytoplasm. The enzyme catalyses tRNA(Pro) + L-proline + ATP = L-prolyl-tRNA(Pro) + AMP + diphosphate. In terms of biological role, catalyzes the attachment of proline to tRNA(Pro) in a two-step reaction: proline is first activated by ATP to form Pro-AMP and then transferred to the acceptor end of tRNA(Pro). As ProRS can inadvertently accommodate and process non-cognate amino acids such as alanine and cysteine, to avoid such errors it has two additional distinct editing activities against alanine. One activity is designated as 'pretransfer' editing and involves the tRNA(Pro)-independent hydrolysis of activated Ala-AMP. The other activity is designated 'posttransfer' editing and involves deacylation of mischarged Ala-tRNA(Pro). The misacylated Cys-tRNA(Pro) is not edited by ProRS. This Leuconostoc mesenteroides subsp. mesenteroides (strain ATCC 8293 / DSM 20343 / BCRC 11652 / CCM 1803 / JCM 6124 / NCDO 523 / NBRC 100496 / NCIMB 8023 / NCTC 12954 / NRRL B-1118 / 37Y) protein is Proline--tRNA ligase.